Consider the following 249-residue polypeptide: Sec-independent protein translocase protein TatC (249 aa).

Transmembrane regions (helical) follow at residues valine 18–phenylalanine 38, alanine 69–leucine 89, valine 96–tyrosine 116, leucine 151–valine 171, isoleucine 187–phenylalanine 207, and methionine 208–proline 228.

This sequence belongs to the TatC family. In terms of assembly, the Tat system comprises two distinct complexes: a TatABC complex, containing multiple copies of TatA, TatB and TatC subunits, and a separate TatA complex, containing only TatA subunits. Substrates initially bind to the TatABC complex, which probably triggers association of the separate TatA complex to form the active translocon.

The protein resides in the cell inner membrane. Part of the twin-arginine translocation (Tat) system that transports large folded proteins containing a characteristic twin-arginine motif in their signal peptide across membranes. Together with TatB, TatC is part of a receptor directly interacting with Tat signal peptides. The sequence is that of Sec-independent protein translocase protein TatC from Helicobacter pylori (strain J99 / ATCC 700824) (Campylobacter pylori J99).